The following is a 1035-amino-acid chain: Tyrosine-protein kinase-like otk (1035 aa).

Positions 1–23 (MDMDVMMISMCILASTLMAPGWA) are cleaved as a signal peptide. 5 Ig-like C2-type domains span residues 24–109 (STSG…REAS), 110–199 (PPAK…RVMS), 251–365 (PEDL…APLN), 368–464 (PGLL…VSIN), and 469–559 (PKFS…VQLV). Over 24–582 (STSGFLRVPQ…GGDGFLVTRA (559 aa)) the chain is Extracellular. Intrachain disulfides connect Cys-47–Cys-96, Cys-138–Cys-188, Cys-276–Cys-354, Cys-399–Cys-448, and Cys-491–Cys-543. N-linked (GlcNAc...) asparagine glycosylation is found at Asn-336, Asn-418, Asn-430, Asn-445, Asn-513, and Asn-525. Residues 583 to 603 (VLITMTVALAYIVLVVGLMLW) traverse the membrane as a helical segment. Over 604–1035 (CRYRRQARKA…SKAMQSVAEK (432 aa)) the chain is Cytoplasmic. Disordered stretches follow at residues 623–683 (AGGD…KSVY) and 721–775 (AQSD…KEEE). A compositionally biased stretch (polar residues) spans 658-676 (KSNGDAQKSDDTACSQQSR). Phosphoserine is present on Ser-681. A Protein kinase; inactive domain is found at 693–1029 (LSELLQIGRG…QLGSALSKAM (337 aa)). Residues 723–734 (SDKDADTEKQHS) are compositionally biased toward basic and acidic residues. Positions 766–775 (DDIEEIKEEE) are enriched in acidic residues.

It belongs to the protein kinase superfamily. Tyr protein kinase family. Insulin receptor subfamily. In terms of assembly, interacts with plexA; component of a receptor complex that mediates the repulsive signaling in response to Semaphorin ligands.

It localises to the cell membrane. Its function is as follows. Acts as a calcium-dependent, homophilic cell adhesion molecule that regulates neural recognition during the development of the nervous system. Component of the repulsive Plexin signaling response to regulate motor axon guidance at the embryonic stage. Also component of a receptor complex that is required in the adult visual system to innervate the lamina layer; specific targeting of R1-R6 axons. The polypeptide is Tyrosine-protein kinase-like otk (Drosophila persimilis (Fruit fly)).